A 776-amino-acid chain; its full sequence is MAGFINLEDSPMFQKQVFSLEGTSDELKDRCQKLYKGVKKFMGALGEASTGVSAFADSLEEFGAGHDDPVSVSIGGPVISKFINTLRELSSYKEFLRSQVEHVLLERLTNFMTVDLQEAKESRRRFDKAVHSYDQAREKFVSLKKNTRGDIVAELEEDLENSKSAFEKSRFNLVNSLMTIEAKKKYEFLESISAIMDSHFKYFKLGYDLLSQLEPYIHQVLTYAQQSKEQSKIEQDRFAQRIQEFRTQSELDSQQASAKADPSDVGGNHVYRAIPRKNVEANSVSTADKEVTKQGYLLKRSASLRADWKRRFFVLDNHGSLYYYRNTGNKSAKSQHYYSGLGEHSSGVFGRFRTRHNRSASQGSLDCNMIDLRTSLIKLDAEDTDLRLCFRIISPQKTYTLQAENGADRMDWVNKITAAITIRLNSHFLQQSPARYLDKKNTSSGPATENLTLNQKEDYNQRLNVGDDVLTILREIPGNNTCAECNAPDPDWASLNLGVLMCIECSGVHRNLGVHISKVRSLTLDVKVWEPTILDLFRNLGNGYCNSVWEELLHHLDDDSEKGSTDTLASVSKPSSEDWFTLKEKYINGKYLEKALVVKDEREANSTASSRIWEAVQSRNIRDIYRLIVKADANIINTKFDDITDLDVYHHHHVDAPDEVKKRHDPNACQRIKNSNEARNCLQGCSLLHVACQSGDPILLELLLQFGADINMRDYHGRTPLHHCIASGNNAFAKVLLRRGARPSIEDGGGLSVLERAMEMGAITDEELFLLLAECQ.

Residues 2–226 form the BAR domain; that stretch reads AGFINLEDSP…IHQVLTYAQQ (225 aa). The tract at residues 248-267 is disordered; that stretch reads QSELDSQQASAKADPSDVGG. Residues 290–421 form the PH domain; sequence EVTKQGYLLK…WVNKITAAIT (132 aa). Residues 467 to 604 form the Arf-GAP domain; it reads DDVLTILREI…ALVVKDEREA (138 aa). Residues 482–505 form a C4-type zinc finger; the sequence is CAECNAPDPDWASLNLGVLMCIEC. ANK repeat units follow at residues 683–712 and 716–745; these read QGCS…DINM and HGRT…RPSI.

As to expression, expressed in roots, hypocotyls, cotyledons, leaf and shoot apical meristems and siliques.

Probable GTPase-activating protein. The sequence is that of ADP-ribosylation factor GTPase-activating protein AGD2 (AGD2) from Arabidopsis thaliana (Mouse-ear cress).